Reading from the N-terminus, the 177-residue chain is Mitochondrial inner membrane protease subunit 2 (177 aa).

A helical membrane pass occupies residues 19-37 (FFVAVPVAVTFLDRVACVA). Catalysis depends on residues Ser-43 and Lys-91.

The protein belongs to the peptidase S26 family. IMP2 subfamily. Heterodimer of 2 subunits, IMMPL1 and IMMPL2.

The protein resides in the mitochondrion inner membrane. In terms of biological role, catalyzes the removal of transit peptides required for the targeting of proteins from the mitochondrial matrix, across the inner membrane, into the inter-membrane space. Known to process the nuclear encoded protein DIABLO. The sequence is that of Mitochondrial inner membrane protease subunit 2 (IMMP2L) from Bos taurus (Bovine).